Reading from the N-terminus, the 383-residue chain is Acetylornithine deacetylase (383 aa).

His-80 lines the Zn(2+) pocket. Residue Asp-82 is part of the active site. Asp-112 contacts Zn(2+). Glu-144 is an active-site residue. Positions 145, 169, and 355 each coordinate Zn(2+).

It belongs to the peptidase M20A family. ArgE subfamily. In terms of assembly, homodimer. It depends on Zn(2+) as a cofactor. Co(2+) serves as cofactor. Requires glutathione as cofactor.

It is found in the cytoplasm. It carries out the reaction N(2)-acetyl-L-ornithine + H2O = L-ornithine + acetate. It functions in the pathway amino-acid biosynthesis; L-arginine biosynthesis; L-ornithine from N(2)-acetyl-L-ornithine (linear): step 1/1. Its function is as follows. Catalyzes the hydrolysis of the amide bond of N(2)-acetylated L-amino acids. Cleaves the acetyl group from N-acetyl-L-ornithine to form L-ornithine, an intermediate in L-arginine biosynthesis pathway, and a branchpoint in the synthesis of polyamines. The polypeptide is Acetylornithine deacetylase (Pectobacterium carotovorum subsp. carotovorum (strain PC1)).